The following is a 117-amino-acid chain: MSNIIKALEQEQMKQDLPKFAPGDTVVVQVKVKEGNRERLQAYEGVVIAIRNRGLHSAFTVRKISNGEGVERTFQTHSPVVDSIEVKRRGAVRRAKLYYLRERSGKSARIKEKLAKK.

The protein belongs to the bacterial ribosomal protein bL19 family.

Its function is as follows. This protein is located at the 30S-50S ribosomal subunit interface and may play a role in the structure and function of the aminoacyl-tRNA binding site. In Vibrio vulnificus (strain CMCP6), this protein is Large ribosomal subunit protein bL19.